A 101-amino-acid polypeptide reads, in one-letter code: Small ribosomal subunit protein uS14 (101 aa).

Belongs to the universal ribosomal protein uS14 family. Part of the 30S ribosomal subunit. Contacts proteins S3 and S10.

Functionally, binds 16S rRNA, required for the assembly of 30S particles and may also be responsible for determining the conformation of the 16S rRNA at the A site. This Paracoccus denitrificans (strain Pd 1222) protein is Small ribosomal subunit protein uS14.